The primary structure comprises 276 residues: Putative pyruvate, phosphate dikinase regulatory protein (276 aa).

An ADP-binding site is contributed by 150 to 157 (GVSRTSKT).

It belongs to the pyruvate, phosphate/water dikinase regulatory protein family. PDRP subfamily.

It carries out the reaction N(tele)-phospho-L-histidyl/L-threonyl-[pyruvate, phosphate dikinase] + ADP = N(tele)-phospho-L-histidyl/O-phospho-L-threonyl-[pyruvate, phosphate dikinase] + AMP + H(+). The enzyme catalyses N(tele)-phospho-L-histidyl/O-phospho-L-threonyl-[pyruvate, phosphate dikinase] + phosphate + H(+) = N(tele)-phospho-L-histidyl/L-threonyl-[pyruvate, phosphate dikinase] + diphosphate. In terms of biological role, bifunctional serine/threonine kinase and phosphorylase involved in the regulation of the pyruvate, phosphate dikinase (PPDK) by catalyzing its phosphorylation/dephosphorylation. This chain is Putative pyruvate, phosphate dikinase regulatory protein, found in Lacticaseibacillus casei (strain BL23) (Lactobacillus casei).